Consider the following 227-residue polypeptide: Cytochrome c oxidase subunit 2 (227 aa).

The Mitochondrial intermembrane portion of the chain corresponds to 1 to 14 (MAYPFQLGFQDATS). A helical membrane pass occupies residues 15–45 (PIMEELLHFHDHTLMIVFLISSLVLYVISAM). At 46 to 59 (LTTNLTHTSTMDAQ) the chain is on the mitochondrial matrix side. Residues 60 to 87 (EVETIWTILPAIILITIALPSLRILYMM) form a helical membrane-spanning segment. Residues 88-227 (DEINNPAMTI…YFEKWSVSML (140 aa)) lie on the Mitochondrial intermembrane side of the membrane. The Cu cation site is built by His161, Cys196, Glu198, Cys200, His204, and Met207. Position 198 (Glu198) interacts with Mg(2+). Phosphotyrosine is present on Tyr218.

Belongs to the cytochrome c oxidase subunit 2 family. As to quaternary structure, component of the cytochrome c oxidase (complex IV, CIV), a multisubunit enzyme composed of 14 subunits. The complex is composed of a catalytic core of 3 subunits MT-CO1, MT-CO2 and MT-CO3, encoded in the mitochondrial DNA, and 11 supernumerary subunits COX4I, COX5A, COX5B, COX6A, COX6B, COX6C, COX7A, COX7B, COX7C, COX8 and NDUFA4, which are encoded in the nuclear genome. The complex exists as a monomer or a dimer and forms supercomplexes (SCs) in the inner mitochondrial membrane with NADH-ubiquinone oxidoreductase (complex I, CI) and ubiquinol-cytochrome c oxidoreductase (cytochrome b-c1 complex, complex III, CIII), resulting in different assemblies (supercomplex SCI(1)III(2)IV(1) and megacomplex MCI(2)III(2)IV(2)). Found in a complex with TMEM177, COA6, COX18, COX20, SCO1 and SCO2. Interacts with TMEM177 in a COX20-dependent manner. Interacts with COX20. Interacts with COX16. Requires Cu cation as cofactor.

It is found in the mitochondrion inner membrane. The catalysed reaction is 4 Fe(II)-[cytochrome c] + O2 + 8 H(+)(in) = 4 Fe(III)-[cytochrome c] + 2 H2O + 4 H(+)(out). In terms of biological role, component of the cytochrome c oxidase, the last enzyme in the mitochondrial electron transport chain which drives oxidative phosphorylation. The respiratory chain contains 3 multisubunit complexes succinate dehydrogenase (complex II, CII), ubiquinol-cytochrome c oxidoreductase (cytochrome b-c1 complex, complex III, CIII) and cytochrome c oxidase (complex IV, CIV), that cooperate to transfer electrons derived from NADH and succinate to molecular oxygen, creating an electrochemical gradient over the inner membrane that drives transmembrane transport and the ATP synthase. Cytochrome c oxidase is the component of the respiratory chain that catalyzes the reduction of oxygen to water. Electrons originating from reduced cytochrome c in the intermembrane space (IMS) are transferred via the dinuclear copper A center (CU(A)) of subunit 2 and heme A of subunit 1 to the active site in subunit 1, a binuclear center (BNC) formed by heme A3 and copper B (CU(B)). The BNC reduces molecular oxygen to 2 water molecules using 4 electrons from cytochrome c in the IMS and 4 protons from the mitochondrial matrix. The protein is Cytochrome c oxidase subunit 2 (MT-CO2) of Macrotus californicus (Californian leaf-nosed bat).